A 196-amino-acid polypeptide reads, in one-letter code: Agamous-like MADS-box protein AGL31 (196 aa).

In terms of domain architecture, MADS-box spans 1–61; it reads MGRKKVEIKR…GKLYKSASGD (61 aa). The region spanning 80-170 is the K-box domain; that stretch reads ALDLAEKTRN…ASQVGKKTFL (91 aa).

In terms of tissue distribution, expressed in most plant tissues, roots, seedlings, leaves, stems, inflorescences, pollen, siliques and flowers.

It is found in the nucleus. Its function is as follows. Probable transcription factor that prevents vernalization by short periods of cold. Acts as a floral repressor. The chain is Agamous-like MADS-box protein AGL31 (AGL31) from Arabidopsis thaliana (Mouse-ear cress).